The primary structure comprises 1404 residues: DNA-directed RNA polymerase subunit beta' (1404 aa).

4 residues coordinate Zn(2+): Cys-72, Cys-74, Cys-87, and Cys-90. The Mg(2+) site is built by Asp-462, Asp-464, and Asp-466. Zn(2+) contacts are provided by Cys-816, Cys-890, Cys-897, and Cys-900.

The protein belongs to the RNA polymerase beta' chain family. As to quaternary structure, the RNAP catalytic core consists of 2 alpha, 1 beta, 1 beta' and 1 omega subunit. When a sigma factor is associated with the core the holoenzyme is formed, which can initiate transcription. Mg(2+) is required as a cofactor. Zn(2+) serves as cofactor.

The catalysed reaction is RNA(n) + a ribonucleoside 5'-triphosphate = RNA(n+1) + diphosphate. DNA-dependent RNA polymerase catalyzes the transcription of DNA into RNA using the four ribonucleoside triphosphates as substrates. In Azoarcus sp. (strain BH72), this protein is DNA-directed RNA polymerase subunit beta'.